The primary structure comprises 359 residues: Histamine H2 receptor (359 aa).

The Extracellular segment spans residues 1–22; sequence MAFNGTVPSFCMDFTVYKVTIS. A glycan (N-linked (GlcNAc...) asparagine) is linked at Asn-4. Residues 23 to 44 form a helical membrane-spanning segment; sequence VILIILILVTVAGNVVVCLAVG. At 45 to 57 the chain is on the cytoplasmic side; it reads LNRRLRSLTNCFI. Residues 58–81 traverse the membrane as a helical segment; the sequence is VSLAVTDLLLGLLVLPFSAIYQLS. The Extracellular portion of the chain corresponds to 82–92; sequence CKWSFSKVFCN. The cysteines at positions 91 and 174 are disulfide-linked. The helical transmembrane segment at 93-114 threads the bilayer; that stretch reads IYTSLDVMLCTASILNLFMISL. The Cytoplasmic segment spans residues 115–134; the sequence is DRYCAVTDPLRYPVLITPAR. Residues 135–159 form a helical membrane-spanning segment; it reads VAISLVFIWVISITLSFLSIHLGWN. The Extracellular segment spans residues 160–180; that stretch reads SRNETSKDNDTIVKCKVQVNE. Residues 181 to 204 traverse the membrane as a helical segment; it reads VYGLVDGLVTFYLPLLIMCITYFR. The Cytoplasmic segment spans residues 205 to 234; sequence IFKIAREQARRINHIGSWKAATIREHKATV. The helical transmembrane segment at 235-258 threads the bilayer; the sequence is TLAAVMGAFIICWFPYFTVFVYRG. Topologically, residues 259–267 are extracellular; it reads LKGDDAVNE. A helical transmembrane segment spans residues 268–289; it reads VFEDVVLWLGYANSALNPILYA. Residues 290–359 are Cytoplasmic-facing; it reads ALNRDFRTAY…VTAPQGATNR (70 aa). A lipid anchor (S-palmitoyl cysteine) is attached at Cys-305.

It belongs to the G-protein coupled receptor 1 family.

It localises to the cell membrane. The H2 subclass of histamine receptors mediates gastric acid secretion. The activity of this receptor is mediated by G proteins which activate adenylyl cyclase. The sequence is that of Histamine H2 receptor (HRH2) from Cavia porcellus (Guinea pig).